The sequence spans 252 residues: 3-dehydroquinate dehydratase (252 aa).

3-dehydroquinate-binding positions include 46 to 48 and R82; that span reads EWR. The active-site Proton donor/acceptor is the H143. K170 acts as the Schiff-base intermediate with substrate in catalysis. 3-dehydroquinate-binding residues include R212, S231, and Q235.

Belongs to the type-I 3-dehydroquinase family. Homodimer.

The enzyme catalyses 3-dehydroquinate = 3-dehydroshikimate + H2O. Its pathway is metabolic intermediate biosynthesis; chorismate biosynthesis; chorismate from D-erythrose 4-phosphate and phosphoenolpyruvate: step 3/7. In terms of biological role, involved in the third step of the chorismate pathway, which leads to the biosynthesis of aromatic amino acids. Catalyzes the cis-dehydration of 3-dehydroquinate (DHQ) and introduces the first double bond of the aromatic ring to yield 3-dehydroshikimate. The chain is 3-dehydroquinate dehydratase from Listeria monocytogenes serovar 1/2a (strain ATCC BAA-679 / EGD-e).